Here is a 151-residue protein sequence, read N- to C-terminus: MTTDTHTLNIEEILELLPHRFPFLLVDRVLDFEKGKFLRAVKNVSFNEPFFQGHFPGKPIFPGVLILEAMAQATGILAFKSVGKLEPGELYYFAAVDEARFKRPVQPGDQMILEVEFIKERRGVARFKGVAKVDGEVACEASMMCARRRES.

The active site involves histidine 54.

The protein belongs to the thioester dehydratase family. FabZ subfamily.

It localises to the cytoplasm. It catalyses the reaction a (3R)-hydroxyacyl-[ACP] = a (2E)-enoyl-[ACP] + H2O. Involved in unsaturated fatty acids biosynthesis. Catalyzes the dehydration of short chain beta-hydroxyacyl-ACPs and long chain saturated and unsaturated beta-hydroxyacyl-ACPs. The polypeptide is 3-hydroxyacyl-[acyl-carrier-protein] dehydratase FabZ (Pectobacterium atrosepticum (strain SCRI 1043 / ATCC BAA-672) (Erwinia carotovora subsp. atroseptica)).